The sequence spans 492 residues: MDPNILWQARNDGSALQEEDIQQLRSSIRGTVVLKNEASEEEYNAAVTRWNNVSIRLATLVVYVEDEQDIVKCVEFVNKHYLDVAVCSHGRHSYHGASSSTGMVIDLGRMRRVSVDKEAMTVTAQGGCIARDVELPLEAEGLATVFGAVNETGIGGLTLGGGVGFLTGAHGLAADNLVSARMVLANGQVVTASDDENSDLFWAIRGAGPNFGIVTEFKYRVHKQGPVFWQMLFYSPDKLKDCVSIVNQMHNISLAQKGGDFQVMMAYLTPPGYPDLHPGLRIFYNGPEEKAKELAAPAYALGPLSVSGGMCNFSDTTRIPPYLEFEGFDRYAASSAHLDYPLDENLLLEVFTMFRNVIHKYGHHLLHPSKCILDLRNYEKVASVPIDATAYSGRFDVAWMIPDLQWDDPAMDSTMRMEVTSITAHIRERVREAKGGHVNGPRDATAIYPNISAGGEEKAKSVFGPNLPRLQVLKRKYDPDFIWNKWFPIVPA.

The 171-residue stretch at 54–224 (SIRLATLVVY…TEFKYRVHKQ (171 aa)) folds into the FAD-binding PCMH-type domain.

It belongs to the oxygen-dependent FAD-linked oxidoreductase family. It depends on FAD as a cofactor.

It participates in pigment biosynthesis. The protein operates within secondary metabolite biosynthesis. In terms of biological role, FAD-linked oxidoreductase; part of the gene cluster that mediates the biosynthesis of pleosporalin A, ascomycone A, as well as a third cryptic naphthoquinone derived pigment, all responsible for the coloration of conidia. Essential for the production of pleosporalin A, but not the 2 other final products. The pathway begins with the biosynthesis of the cyclized heptaketide 3-acetonyl-1,6,8-trihydroxy-2-naphthaldehyde by the NR-PKS pgmA. The C-6 hydroxyl group is further methylated by the O-methyltransferase pgmB to yield fusarubinaldehyde which is in turn oxidized by the cytochrome P450 monooxygenase pgmC at C-9. The C-1 hydroxyl group is then methylated spontaneously. Although pgmE, pgmD and pgmH are essential for the production of pleosporalin A, it is not the case for the 2 other final products and it remains difficult to assign a specific function to each enzyme. PgmF and pgmG seem not to be involved in pigment biosynthesis although they were regulated by the cluster-specific transcription factor pgmR. This Aspergillus terreus protein is FAD-linked oxidoreductase pgmH.